A 356-amino-acid chain; its full sequence is UDP-3-O-acylglucosamine N-acyltransferase (356 aa).

H242 (proton acceptor) is an active-site residue.

This sequence belongs to the transferase hexapeptide repeat family. LpxD subfamily. In terms of assembly, homotrimer.

The enzyme catalyses a UDP-3-O-[(3R)-3-hydroxyacyl]-alpha-D-glucosamine + a (3R)-hydroxyacyl-[ACP] = a UDP-2-N,3-O-bis[(3R)-3-hydroxyacyl]-alpha-D-glucosamine + holo-[ACP] + H(+). The protein operates within bacterial outer membrane biogenesis; LPS lipid A biosynthesis. In terms of biological role, catalyzes the N-acylation of UDP-3-O-acylglucosamine using 3-hydroxyacyl-ACP as the acyl donor. Is involved in the biosynthesis of lipid A, a phosphorylated glycolipid that anchors the lipopolysaccharide to the outer membrane of the cell. This is UDP-3-O-acylglucosamine N-acyltransferase from Acinetobacter baumannii (strain AB307-0294).